The following is a 288-amino-acid chain: Bifunctional protein FolD (288 aa).

NADP(+) contacts are provided by residues 165-167 (GRS) and S190.

It belongs to the tetrahydrofolate dehydrogenase/cyclohydrolase family. As to quaternary structure, homodimer.

It carries out the reaction (6R)-5,10-methylene-5,6,7,8-tetrahydrofolate + NADP(+) = (6R)-5,10-methenyltetrahydrofolate + NADPH. The catalysed reaction is (6R)-5,10-methenyltetrahydrofolate + H2O = (6R)-10-formyltetrahydrofolate + H(+). Its pathway is one-carbon metabolism; tetrahydrofolate interconversion. Functionally, catalyzes the oxidation of 5,10-methylenetetrahydrofolate to 5,10-methenyltetrahydrofolate and then the hydrolysis of 5,10-methenyltetrahydrofolate to 10-formyltetrahydrofolate. The polypeptide is Bifunctional protein FolD (Bdellovibrio bacteriovorus (strain ATCC 15356 / DSM 50701 / NCIMB 9529 / HD100)).